A 276-amino-acid chain; its full sequence is Large ribosomal subunit protein uL2 (276 aa).

2 disordered regions span residues Q37–K59 and V225–R276. Over residues Q39–I49 the composition is skewed to polar residues. The span at T50–K59 shows a compositional bias: basic residues.

This sequence belongs to the universal ribosomal protein uL2 family. In terms of assembly, part of the 50S ribosomal subunit. Forms a bridge to the 30S subunit in the 70S ribosome.

In terms of biological role, one of the primary rRNA binding proteins. Required for association of the 30S and 50S subunits to form the 70S ribosome, for tRNA binding and peptide bond formation. It has been suggested to have peptidyltransferase activity; this is somewhat controversial. Makes several contacts with the 16S rRNA in the 70S ribosome. In Ralstonia pickettii (strain 12J), this protein is Large ribosomal subunit protein uL2.